Reading from the N-terminus, the 213-residue chain is ATP-dependent Clp protease proteolytic subunit 3 (213 aa).

S107 acts as the Nucleophile in catalysis. The active site involves H132.

It belongs to the peptidase S14 family. As to quaternary structure, fourteen ClpP subunits assemble into 2 heptameric rings which stack back to back to give a disk-like structure with a central cavity, resembling the structure of eukaryotic proteasomes.

Its subcellular location is the cytoplasm. The enzyme catalyses Hydrolysis of proteins to small peptides in the presence of ATP and magnesium. alpha-casein is the usual test substrate. In the absence of ATP, only oligopeptides shorter than five residues are hydrolyzed (such as succinyl-Leu-Tyr-|-NHMec, and Leu-Tyr-Leu-|-Tyr-Trp, in which cleavage of the -Tyr-|-Leu- and -Tyr-|-Trp bonds also occurs).. In terms of biological role, cleaves peptides in various proteins in a process that requires ATP hydrolysis. Has a chymotrypsin-like activity. Plays a major role in the degradation of misfolded proteins. The sequence is that of ATP-dependent Clp protease proteolytic subunit 3 from Frankia casuarinae (strain DSM 45818 / CECT 9043 / HFP020203 / CcI3).